Here is a 110-residue protein sequence, read N- to C-terminus: Large ribosomal subunit protein uL22 (110 aa).

It belongs to the universal ribosomal protein uL22 family. As to quaternary structure, part of the 50S ribosomal subunit.

Functionally, this protein binds specifically to 23S rRNA; its binding is stimulated by other ribosomal proteins, e.g. L4, L17, and L20. It is important during the early stages of 50S assembly. It makes multiple contacts with different domains of the 23S rRNA in the assembled 50S subunit and ribosome. The globular domain of the protein is located near the polypeptide exit tunnel on the outside of the subunit, while an extended beta-hairpin is found that lines the wall of the exit tunnel in the center of the 70S ribosome. The polypeptide is Large ribosomal subunit protein uL22 (Pasteurella multocida (strain Pm70)).